A 128-amino-acid chain; its full sequence is 3-aminoacrylate deaminase RutC (128 aa).

The protein belongs to the RutC family. As to quaternary structure, homotrimer.

The catalysed reaction is (Z)-3-aminoacrylate + H2O + H(+) = 3-oxopropanoate + NH4(+). Functionally, involved in pyrimidine catabolism. Catalyzes the deamination of 3-aminoacrylate to malonic semialdehyde, a reaction that can also occur spontaneously. RutC may facilitate the reaction and modulate the metabolic fitness, rather than catalyzing essential functions. This is 3-aminoacrylate deaminase RutC from Escherichia coli (strain SE11).